Reading from the N-terminus, the 482-residue chain is MSTVESALTRRIMGIETEYGLTFVDGDSKKLRPDEIARRMFRPIVEKYSSSNIFIPNGSRLYLDVGSHPEYATAECDNLTQLINFEKAGDVIADRMAVDAEESLAKEDIAGQVYLFKNNVDSVGNSYGCHENYLVGRSMPLKALGKRLMPFLITRQLICGAGRIHHPNPLDKGESFPLGYCISQRSDHVWEGVSSATTRSRPIINTRDEPHADSHSYRRLHVIVGDANMAEPSIALKVGSTLLVLEMIEADFGLPSLELANDIASIREISRDATGSTLLSLKDGTTMTALQIQQVVFEHASKWLEQRPEPEFSGTSNTEMARVLDLWGRMLKAIESGDFSEVDTEIDWVIKKKLIDRFIQRGNLGLDDPKLAQVDLTYHDIRPGRGLFSVLQSRGMIKRWTTDEAILAAVDTAPDTTRAHLRGRILKAADTLGVPVTVDWMRHKVNRPEPQSVELGDPFSAVNSEVDQLIEYMTVHAESYRS.

Mg(2+) is bound at residue glutamate 16. Arginine 60 is an ATP binding site. Residue tyrosine 62 participates in Mg(2+) binding. The active-site Proton acceptor is the aspartate 64. Glutamate 70 serves as a coordination point for Mg(2+). The ATP site is built by threonine 73 and tryptophan 440.

The protein belongs to the Pup ligase/Pup deamidase family. Pup-conjugating enzyme subfamily.

The enzyme catalyses ATP + [prokaryotic ubiquitin-like protein]-L-glutamate + [protein]-L-lysine = ADP + phosphate + N(6)-([prokaryotic ubiquitin-like protein]-gamma-L-glutamyl)-[protein]-L-lysine.. The protein operates within protein degradation; proteasomal Pup-dependent pathway. It functions in the pathway protein modification; protein pupylation. Functionally, catalyzes the covalent attachment of the prokaryotic ubiquitin-like protein modifier Pup to the proteasomal substrate proteins, thereby targeting them for proteasomal degradation. This tagging system is termed pupylation. The ligation reaction involves the side-chain carboxylate of the C-terminal glutamate of Pup and the side-chain amino group of a substrate lysine. The chain is Pup--protein ligase from Corynebacterium glutamicum (strain R).